The sequence spans 1357 residues: Kinectin (1357 aa).

The Cytoplasmic segment spans residues 1–6; sequence MEFYES. The chain crosses the membrane as a helical; Signal-anchor for type II membrane protein span at residues 7 to 29; it reads AYFIVLIPSIVITVIFLFFWLFM. Over 30 to 1357 the chain is Lumenal; it reads KETLYDEVLA…KEKEHYQVLE (1328 aa). Disordered regions lie at residues 48-81 and 103-218; these read IPTK…ESVP and NVVE…KQKT. Phosphoserine; by FAM20C is present on serine 75. Serine 77 bears the Phosphoserine mark. Residues 121-135 are compositionally biased toward basic and acidic residues; that stretch reads QKPVLEEQVIKESDA. Phosphothreonine is present on threonine 153. A Phosphoserine modification is found at serine 156. The segment covering 161–171 has biased composition (basic residues); that stretch reads SKKKPGQKKSK. Residues asparagine 172, asparagine 435, asparagine 772, asparagine 904, and asparagine 1055 are each glycosylated (N-linked (GlcNAc...) asparagine). Positions 172–182 are enriched in basic and acidic residues; the sequence is NGSDDQDKKVE. Residues 330–1356 adopt a coiled-coil conformation; sequence LIHQLQEKDK…TKEKEHYQVL (1027 aa). Serine 1084 carries the post-translational modification Phosphoserine. N-linked (GlcNAc...) asparagine glycans are attached at residues asparagine 1088 and asparagine 1263. At serine 1313 the chain carries Phosphoserine. Asparagine 1329 carries an N-linked (GlcNAc...) asparagine glycan.

The protein belongs to the kinectin family. As to quaternary structure, parallel homodimers formed between the membrane-bound and the cytosolic form, and also between 2 cytosolic forms. In terms of tissue distribution, high levels in peripheral blood lymphocytes, testis and ovary, lower levels in spleen, thymus, prostate, small intestine and colon.

Its subcellular location is the endoplasmic reticulum membrane. Receptor for kinesin thus involved in kinesin-driven vesicle motility. Accumulates in integrin-based adhesion complexes (IAC) upon integrin aggregation by fibronectin. This Homo sapiens (Human) protein is Kinectin (KTN1).